We begin with the raw amino-acid sequence, 359 residues long: Heat-inducible transcription repressor HrcA (359 aa).

This sequence belongs to the HrcA family.

Functionally, negative regulator of class I heat shock genes (grpE-dnaK-dnaJ and groELS operons). Prevents heat-shock induction of these operons. The sequence is that of Heat-inducible transcription repressor HrcA from Roseiflexus sp. (strain RS-1).